The chain runs to 137 residues: 15.7 kDa heat shock protein, peroxisomal (137 aa).

The region spanning 15–134 (QEWSRSTALI…SSKVRNVNIT (120 aa)) is the sHSP domain. Residues 135 to 137 (SKL) carry the Microbody targeting signal motif.

The protein belongs to the small heat shock protein (HSP20) family. In terms of assembly, may form oligomeric structures.

Its subcellular location is the peroxisome. Its function is as follows. Possesses chaperone activity. The polypeptide is 15.7 kDa heat shock protein, peroxisomal (HSP15.7) (Arabidopsis thaliana (Mouse-ear cress)).